Reading from the N-terminus, the 469-residue chain is Aspartyl/glutamyl-tRNA(Asn/Gln) amidotransferase subunit B (469 aa).

This sequence belongs to the GatB/GatE family. GatB subfamily. As to quaternary structure, heterotrimer of A, B and C subunits.

It catalyses the reaction L-glutamyl-tRNA(Gln) + L-glutamine + ATP + H2O = L-glutaminyl-tRNA(Gln) + L-glutamate + ADP + phosphate + H(+). The enzyme catalyses L-aspartyl-tRNA(Asn) + L-glutamine + ATP + H2O = L-asparaginyl-tRNA(Asn) + L-glutamate + ADP + phosphate + 2 H(+). Its function is as follows. Allows the formation of correctly charged Asn-tRNA(Asn) or Gln-tRNA(Gln) through the transamidation of misacylated Asp-tRNA(Asn) or Glu-tRNA(Gln) in organisms which lack either or both of asparaginyl-tRNA or glutaminyl-tRNA synthetases. The reaction takes place in the presence of glutamine and ATP through an activated phospho-Asp-tRNA(Asn) or phospho-Glu-tRNA(Gln). The chain is Aspartyl/glutamyl-tRNA(Asn/Gln) amidotransferase subunit B from Methanococcus maripaludis (strain DSM 14266 / JCM 13030 / NBRC 101832 / S2 / LL).